Consider the following 1483-residue polypeptide: Chromosome partition protein MukB (1483 aa).

An ATP-binding site is contributed by 34–41; the sequence is GGNGAGKS. 7 coiled-coil regions span residues 326–418, 444–480, 509–601, 780–804, 837–923, 977–1115, and 1209–1265; these read LEAD…QYNQ, LETFQAKELEATEKMLSLEQKMSMAQTAHSQFEQAYQ, RHLA…MQRA, RAACESRIESLHAEREVLSERFATL, EIRQ…AKLE, EMLS…TAKA, and VEAI…LQNV. Residues 666–783 form a flexible hinge region; it reads PGGSEDQRLN…EVPLFGRAAC (118 aa).

This sequence belongs to the SMC family. MukB subfamily. As to quaternary structure, homodimerization via its hinge domain. Binds to DNA via its C-terminal region. Interacts, and probably forms a ternary complex, with MukE and MukF via its C-terminal region. The complex formation is stimulated by calcium or magnesium. Interacts with tubulin-related protein FtsZ.

It localises to the cytoplasm. The protein localises to the nucleoid. Plays a central role in chromosome condensation, segregation and cell cycle progression. Functions as a homodimer, which is essential for chromosome partition. Involved in negative DNA supercoiling in vivo, and by this means organize and compact chromosomes. May achieve or facilitate chromosome segregation by condensation DNA from both sides of a centrally located replisome during cell division. The chain is Chromosome partition protein MukB from Shigella dysenteriae serotype 1 (strain Sd197).